Consider the following 595-residue polypeptide: 2-succinyl-5-enolpyruvyl-6-hydroxy-3-cyclohexene-1-carboxylate synthase (595 aa).

The protein belongs to the TPP enzyme family. MenD subfamily. Homodimer. The cofactor is Mg(2+). It depends on Mn(2+) as a cofactor. Thiamine diphosphate serves as cofactor.

It carries out the reaction isochorismate + 2-oxoglutarate + H(+) = 5-enolpyruvoyl-6-hydroxy-2-succinyl-cyclohex-3-ene-1-carboxylate + CO2. It participates in quinol/quinone metabolism; 1,4-dihydroxy-2-naphthoate biosynthesis; 1,4-dihydroxy-2-naphthoate from chorismate: step 2/7. Its pathway is cofactor biosynthesis; phylloquinone biosynthesis. Its function is as follows. Catalyzes the thiamine diphosphate-dependent decarboxylation of 2-oxoglutarate and the subsequent addition of the resulting succinic semialdehyde-thiamine pyrophosphate anion to isochorismate to yield 2-succinyl-5-enolpyruvyl-6-hydroxy-3-cyclohexene-1-carboxylate (SEPHCHC). The protein is 2-succinyl-5-enolpyruvyl-6-hydroxy-3-cyclohexene-1-carboxylate synthase of Synechocystis sp. (strain ATCC 27184 / PCC 6803 / Kazusa).